A 93-amino-acid polypeptide reads, in one-letter code: Putative defensin-like protein 283 (93 aa).

A signal peptide spans 1–24 (MTKIGFYLATYATIYIILSPGLLA). 3 disulfides stabilise this stretch: C43-C83, C66-C90, and C72-C92.

This sequence belongs to the DEFL family.

The protein localises to the secreted. In Arabidopsis thaliana (Mouse-ear cress), this protein is Putative defensin-like protein 283.